A 550-amino-acid polypeptide reads, in one-letter code: Transcription factor 7-like 1-C (550 aa).

Over residues methionine 1–glutamate 11 the composition is skewed to gly residues. The segment at methionine 1–serine 60 is interaction with CTNNB1-A. Disordered regions lie at residues methionine 1 to arginine 76, glycine 182 to glutamate 206, and tryptophan 390 to threonine 473. 2 stretches are compositionally biased toward basic and acidic residues: residues glutamate 17–proline 32 and serine 51–arginine 76. The tract at residues leucine 108–valine 311 is interaction with AES and TLE4-A. A DNA-binding region (HMG box) is located at residues isoleucine 323–serine 391. Over residues lysine 406–threonine 415 the composition is skewed to basic and acidic residues. The interaction with CTBP-B stretch occupies residues glutamine 407–aspartate 550. The span at serine 444–serine 463 shows a compositional bias: low complexity. Polar residues predominate over residues glutamate 464–threonine 473.

It belongs to the TCF/LEF family. As to quaternary structure, interacts with csnk1e, ctnnb1-A, ctbp-B, dact1-A and gsk3b. May interact with ase and tle4-A. Post-translationally, phosphorylated. Phosphorylation by csnk1e promotes binding to ctnnb1-A while phosphorylation by gsk3b may reverse this effect.

The protein resides in the nucleus. Participates in the Wnt signaling pathway. Binds to DNA and acts as a repressor in the absence of ctnnb1-A and possibly ctnnb1-B, and as an activator in the presence of these proteins. Required early in development for the establishment of the dorsal body axis in response to maternal Wnt signaling. In Xenopus laevis (African clawed frog), this protein is Transcription factor 7-like 1-C (tcf7l1-c).